The following is a 128-amino-acid chain: Glycine cleavage system H protein (128 aa).

A Lipoyl-binding domain is found at 24-106 (VYTVGITEHA…YAEGFLFQIK (83 aa)). Residue Lys-65 is modified to N6-lipoyllysine.

Belongs to the GcvH family. As to quaternary structure, the glycine cleavage system is composed of four proteins: P, T, L and H. Requires (R)-lipoate as cofactor.

The glycine cleavage system catalyzes the degradation of glycine. The H protein shuttles the methylamine group of glycine from the P protein to the T protein. The polypeptide is Glycine cleavage system H protein (Serratia proteamaculans (strain 568)).